A 128-amino-acid chain; its full sequence is KHDC1-like protein (128 aa).

It belongs to the KHDC1 family.

In Homo sapiens (Human), this protein is KHDC1-like protein (KHDC1L).